The following is a 184-amino-acid chain: dCTP deaminase (184 aa).

DCTP contacts are provided by residues 107-112 (KSTYAR), 131-133 (TLE), Q152, Y166, and Q176. The active-site Proton donor/acceptor is E133.

Belongs to the dCTP deaminase family. As to quaternary structure, homotrimer.

The catalysed reaction is dCTP + H2O + H(+) = dUTP + NH4(+). Its pathway is pyrimidine metabolism; dUMP biosynthesis; dUMP from dCTP (dUTP route): step 1/2. Catalyzes the deamination of dCTP to dUTP. The polypeptide is dCTP deaminase (Rhizorhabdus wittichii (strain DSM 6014 / CCUG 31198 / JCM 15750 / NBRC 105917 / EY 4224 / RW1) (Sphingomonas wittichii)).